We begin with the raw amino-acid sequence, 437 residues long: Methylenetetrahydrofolate--tRNA-(uracil-5-)-methyltransferase TrmFO (437 aa).

FAD is bound at residue 10 to 15; sequence GAGLAG.

The protein belongs to the MnmG family. TrmFO subfamily. It depends on FAD as a cofactor.

It is found in the cytoplasm. The catalysed reaction is uridine(54) in tRNA + (6R)-5,10-methylene-5,6,7,8-tetrahydrofolate + NADH + H(+) = 5-methyluridine(54) in tRNA + (6S)-5,6,7,8-tetrahydrofolate + NAD(+). It carries out the reaction uridine(54) in tRNA + (6R)-5,10-methylene-5,6,7,8-tetrahydrofolate + NADPH + H(+) = 5-methyluridine(54) in tRNA + (6S)-5,6,7,8-tetrahydrofolate + NADP(+). Functionally, catalyzes the folate-dependent formation of 5-methyl-uridine at position 54 (M-5-U54) in all tRNAs. In Brevibacillus brevis (strain 47 / JCM 6285 / NBRC 100599), this protein is Methylenetetrahydrofolate--tRNA-(uracil-5-)-methyltransferase TrmFO.